Consider the following 137-residue polypeptide: Fluoride-specific ion channel FluC 1 (137 aa).

A run of 4 helical transmembrane segments spans residues 4–24, 37–57, 67–87, and 100–120; these read LIYI…YYLG, LATL…TTYI, VITG…TFSV, and IAFL…GLGY. Positions 77 and 80 each coordinate Na(+).

Belongs to the fluoride channel Fluc/FEX (TC 1.A.43) family.

It localises to the cell membrane. The enzyme catalyses fluoride(in) = fluoride(out). Na(+) is not transported, but it plays an essential structural role and its presence is essential for fluoride channel function. Functionally, fluoride-specific ion channel. Important for reducing fluoride concentration in the cell, thus reducing its toxicity. The polypeptide is Fluoride-specific ion channel FluC 1 (Bacillus thuringiensis subsp. konkukian (strain 97-27)).